The following is a 1358-amino-acid chain: Phosphoribosylformylglycinamidine synthase (1358 aa).

The residue at position 2 (Thr-2) is an N-acetylthreonine. Residues 339 to 363 form a disordered region; it reads AVSPFPGAATGSGGEIRDEGATGRG. ATP is bound by residues 345 to 356, 424 to 426, and Ala-719; these read GAATGSGGEIRD and NGY. Positions 720, 762, 766, and 930 each coordinate Mg(2+). Ser-932 contributes to the ATP binding site. In terms of domain architecture, Glutamine amidotransferase type-1 spans 1093 to 1358; it reads VAILREQGVN…LFRSARRWVG (266 aa). The active-site Nucleophile is the Cys-1187. Active-site residues include His-1319 and Glu-1321.

This sequence in the N-terminal section; belongs to the FGAMS family.

It localises to the cytoplasm. The catalysed reaction is N(2)-formyl-N(1)-(5-phospho-beta-D-ribosyl)glycinamide + L-glutamine + ATP + H2O = 2-formamido-N(1)-(5-O-phospho-beta-D-ribosyl)acetamidine + L-glutamate + ADP + phosphate + H(+). The protein operates within purine metabolism; IMP biosynthesis via de novo pathway; 5-amino-1-(5-phospho-D-ribosyl)imidazole from N(2)-formyl-N(1)-(5-phospho-D-ribosyl)glycinamide: step 1/2. In terms of biological role, phosphoribosylformylglycinamidine synthase involved in the purines biosynthetic pathway. Catalyzes the ATP-dependent conversion of formylglycinamide ribonucleotide (FGAR) and glutamine to yield formylglycinamidine ribonucleotide (FGAM) and glutamate. In Saccharomyces cerevisiae (strain ATCC 204508 / S288c) (Baker's yeast), this protein is Phosphoribosylformylglycinamidine synthase (ADE6).